Reading from the N-terminus, the 89-residue chain is Small ribosomal subunit protein bS16 (89 aa).

Belongs to the bacterial ribosomal protein bS16 family.

The chain is Small ribosomal subunit protein bS16 from Chloroflexus aggregans (strain MD-66 / DSM 9485).